The primary structure comprises 501 residues: Ribose import ATP-binding protein RbsA (501 aa).

2 ABC transporter domains span residues L5 to K241 and A252 to L495. ATP is bound at residue G37–S44.

It belongs to the ABC transporter superfamily. Ribose importer (TC 3.A.1.2.1) family. As to quaternary structure, the complex is composed of an ATP-binding protein (RbsA), two transmembrane proteins (RbsC) and a solute-binding protein (RbsB).

Its subcellular location is the cell inner membrane. It carries out the reaction D-ribose(out) + ATP + H2O = D-ribose(in) + ADP + phosphate + H(+). Part of the ABC transporter complex RbsABC involved in ribose import. Responsible for energy coupling to the transport system. The sequence is that of Ribose import ATP-binding protein RbsA from Salmonella typhi.